A 1219-amino-acid chain; its full sequence is DNA ligase 4 (1219 aa).

Positions 251, 253, 258, 273, 303, 342, 418, 423, 434, 440, and 442 each coordinate ATP. Lys-253 serves as the catalytic N6-AMP-lysine intermediate. Glu-303 is a binding site for Mg(2+). A Mg(2+)-binding site is contributed by Glu-418. Residues 604 to 632 form a disordered region; the sequence is NGTTQKQKESESTQDNPKVNKSSKRGEKK. BRCT domains follow at residues 651–739 and 807–909; these read GKTS…PKYF and VYFY…VYTL. 2 disordered regions span residues 914–1126 and 1146–1197; these read MEES…MDMK and IPSQ…SDVV. Over residues 932-960 the composition is skewed to polar residues; the sequence is VASQGSAQTKEPASSKIAITSSRGRSNTR. Over residues 1042–1051 the composition is skewed to basic residues; that stretch reads QRSRRGKKAA. The span at 1056-1065 shows a compositional bias: acidic residues; sequence DESDENDELD. Composition is skewed to basic and acidic residues over residues 1084–1096 and 1117–1126; these read VENEETREPDIAK and RNAKTEMDMK. Residues 1148 to 1159 are compositionally biased toward polar residues; it reads SQKTTETSNRTT.

This sequence belongs to the ATP-dependent DNA ligase family. As to quaternary structure, interacts with XRCC4 via its tandem BRCT domains. Interacts with POLL. Requires Mg(2+) as cofactor. As to expression, widely expressed, with higher levels in young flowers and roots.

The protein resides in the nucleus. The catalysed reaction is ATP + (deoxyribonucleotide)n-3'-hydroxyl + 5'-phospho-(deoxyribonucleotide)m = (deoxyribonucleotide)n+m + AMP + diphosphate.. DNA ligase involved in DNA non-homologous end joining (NHEJ); required for double-strand break (DSB) repair. May be involved for T-DNA integration even if not absolutely required. Seems to be dispensable under normal growth conditions. This chain is DNA ligase 4 (LIG4), found in Arabidopsis thaliana (Mouse-ear cress).